The primary structure comprises 581 residues: NADH-quinone oxidoreductase subunit C/D (581 aa).

Residues 1 to 172 (MSATDLVSEL…PLFNMTAALF (172 aa)) form an NADH dehydrogenase I subunit C region. The interval 196–581 (ELMILNYGPH…IDYVMSDVDR (386 aa)) is NADH dehydrogenase I subunit D.

It in the N-terminal section; belongs to the complex I 30 kDa subunit family. This sequence in the C-terminal section; belongs to the complex I 49 kDa subunit family. NDH-1 is composed of 13 different subunits. Subunits NuoB, CD, E, F, and G constitute the peripheral sector of the complex.

It localises to the cell inner membrane. The catalysed reaction is a quinone + NADH + 5 H(+)(in) = a quinol + NAD(+) + 4 H(+)(out). NDH-1 shuttles electrons from NADH, via FMN and iron-sulfur (Fe-S) centers, to quinones in the respiratory chain. The immediate electron acceptor for the enzyme in this species is believed to be ubiquinone. Couples the redox reaction to proton translocation (for every two electrons transferred, four hydrogen ions are translocated across the cytoplasmic membrane), and thus conserves the redox energy in a proton gradient. The protein is NADH-quinone oxidoreductase subunit C/D of Rhodopseudomonas palustris (strain HaA2).